Reading from the N-terminus, the 252-residue chain is Imidazole glycerol phosphate synthase subunit HisF (252 aa).

Active-site residues include aspartate 11 and aspartate 130.

Belongs to the HisA/HisF family. As to quaternary structure, heterodimer of HisH and HisF.

The protein localises to the cytoplasm. The catalysed reaction is 5-[(5-phospho-1-deoxy-D-ribulos-1-ylimino)methylamino]-1-(5-phospho-beta-D-ribosyl)imidazole-4-carboxamide + L-glutamine = D-erythro-1-(imidazol-4-yl)glycerol 3-phosphate + 5-amino-1-(5-phospho-beta-D-ribosyl)imidazole-4-carboxamide + L-glutamate + H(+). It participates in amino-acid biosynthesis; L-histidine biosynthesis; L-histidine from 5-phospho-alpha-D-ribose 1-diphosphate: step 5/9. Its function is as follows. IGPS catalyzes the conversion of PRFAR and glutamine to IGP, AICAR and glutamate. The HisF subunit catalyzes the cyclization activity that produces IGP and AICAR from PRFAR using the ammonia provided by the HisH subunit. The polypeptide is Imidazole glycerol phosphate synthase subunit HisF (Bacillus velezensis (strain DSM 23117 / BGSC 10A6 / LMG 26770 / FZB42) (Bacillus amyloliquefaciens subsp. plantarum)).